The chain runs to 45 residues: DSCSNIIQPLTPCLNYVRALGQFSDIDIQTIPEQCGISATLPPID.

Belongs to the plant LTP family. Expressed in pollen.

Its function is as follows. Plant non-specific lipid-transfer proteins transfer phospholipids as well as galactolipids across membranes. May play a role in wax or cutin deposition in the cell walls of expanding epidermal cells and certain secretory tissues. In Broussonetia papyrifera (Paper mulberry), this protein is Non-specific lipid-transfer protein.